Consider the following 435-residue polypeptide: Glutamyl-tRNA reductase (435 aa).

Substrate is bound by residues Thr-49 to Arg-52, Ser-109, Glu-114 to Gln-116, and Gln-120. Cys-50 (nucleophile) is an active-site residue. Gly-198 to Ser-203 contributes to the NADP(+) binding site.

The protein belongs to the glutamyl-tRNA reductase family. In terms of assembly, homodimer.

The enzyme catalyses (S)-4-amino-5-oxopentanoate + tRNA(Glu) + NADP(+) = L-glutamyl-tRNA(Glu) + NADPH + H(+). It participates in porphyrin-containing compound metabolism; protoporphyrin-IX biosynthesis; 5-aminolevulinate from L-glutamyl-tRNA(Glu): step 1/2. It functions in the pathway porphyrin-containing compound metabolism; chlorophyll biosynthesis. In terms of biological role, catalyzes the NADPH-dependent reduction of glutamyl-tRNA(Glu) to glutamate 1-semialdehyde (GSA). This Prochlorococcus marinus (strain MIT 9211) protein is Glutamyl-tRNA reductase.